Here is a 429-residue protein sequence, read N- to C-terminus: Adenylosuccinate synthetase (429 aa).

GTP-binding positions include 12–18 (GDEGKGK) and 40–42 (GHT). The active-site Proton acceptor is aspartate 13. Positions 13 and 40 each coordinate Mg(2+). Residues 13–16 (DEGK), 38–41 (NAGH), threonine 128, arginine 142, glutamine 223, threonine 238, and arginine 302 each bind IMP. Histidine 41 serves as the catalytic Proton donor. 298–304 (TTTGRPR) is a substrate binding site. Residues arginine 304, 330–332 (SID), and 412–414 (SVG) each bind GTP.

Belongs to the adenylosuccinate synthetase family. As to quaternary structure, homodimer. Requires Mg(2+) as cofactor.

It is found in the cytoplasm. It carries out the reaction IMP + L-aspartate + GTP = N(6)-(1,2-dicarboxyethyl)-AMP + GDP + phosphate + 2 H(+). Its pathway is purine metabolism; AMP biosynthesis via de novo pathway; AMP from IMP: step 1/2. Plays an important role in the de novo pathway of purine nucleotide biosynthesis. Catalyzes the first committed step in the biosynthesis of AMP from IMP. The chain is Adenylosuccinate synthetase from Bacillus cereus (strain ATCC 14579 / DSM 31 / CCUG 7414 / JCM 2152 / NBRC 15305 / NCIMB 9373 / NCTC 2599 / NRRL B-3711).